Here is a 165-residue protein sequence, read N- to C-terminus: Small ribosomal subunit protein uS17m (165 aa).

It belongs to the universal ribosomal protein uS17 family. As to quaternary structure, component of the mitochondrial small ribosomal subunit (mt-SSU). Mature N.crassa 74S mitochondrial ribosomes consist of a small (37S) and a large (54S) subunit. The 37S small subunit contains a 16S ribosomal RNA (16S mt-rRNA) and 32 different proteins. The 54S large subunit contains a 23S rRNA (23S mt-rRNA) and 42 different proteins. uS17m interacts with the F(1)-ATPase inhibitor IF(1) dimer.

Its subcellular location is the mitochondrion. Component of the mitochondrial ribosome (mitoribosome), a dedicated translation machinery responsible for the synthesis of mitochondrial genome-encoded proteins, including at least some of the essential transmembrane subunits of the mitochondrial respiratory chain. The mitoribosomes are attached to the mitochondrial inner membrane and translation products are cotranslationally integrated into the membrane. This is Small ribosomal subunit protein uS17m (mrps17) from Neurospora crassa (strain ATCC 24698 / 74-OR23-1A / CBS 708.71 / DSM 1257 / FGSC 987).